Here is a 460-residue protein sequence, read N- to C-terminus: Transcriptional regulatory protein UME1 (460 aa).

Positions 14 to 22 (NEEFKIWKK) match the NEE-box motif. 4 WD repeats span residues 233–271 (PGIK…KPLW), 276–316 (SLDG…ALGD), 339–379 (FYSE…AIYN), and 411–451 (GENN…VLDG).

As to quaternary structure, component of the RPD3C(L) complex composed of at least ASH1, CTI6, DEP1, PHO23, RPD3, RXT2, RXT3, SAP30, SDS3, SIN3, UME1 and UME6. Component of the RPD3C(S) complex composed of at least EAF3, RCO1, RPD3, SIN3, and UME1. Interacts with RPD3.

The protein localises to the cytoplasm. It is found in the nucleus. In terms of biological role, catalytic component of the RPD3 histone deacetylase complexes RPD3C(L) and RPD3C(S) responsible for the deacetylation of lysine residues on the N-terminal part of the core histones (H2A, H2B, H3 and H4). Histone deacetylation gives a tag for epigenetic repression and plays an important role in transcriptional regulation, cell cycle progression and developmental events. The protein is Transcriptional regulatory protein UME1 (UME1) of Saccharomyces cerevisiae (strain ATCC 204508 / S288c) (Baker's yeast).